The following is a 916-amino-acid chain: Isoleucine--tRNA ligase (916 aa).

Residues P57–H67 carry the 'HIGH' region motif. E554 lines the L-isoleucyl-5'-AMP pocket. Residues K595–S599 carry the 'KMSKS' region motif. Position 598 (K598) interacts with ATP. 4 residues coordinate Zn(2+): C885, C888, C905, and C908.

This sequence belongs to the class-I aminoacyl-tRNA synthetase family. IleS type 1 subfamily. As to quaternary structure, monomer. It depends on Zn(2+) as a cofactor.

The protein resides in the cytoplasm. The catalysed reaction is tRNA(Ile) + L-isoleucine + ATP = L-isoleucyl-tRNA(Ile) + AMP + diphosphate. Catalyzes the attachment of isoleucine to tRNA(Ile). As IleRS can inadvertently accommodate and process structurally similar amino acids such as valine, to avoid such errors it has two additional distinct tRNA(Ile)-dependent editing activities. One activity is designated as 'pretransfer' editing and involves the hydrolysis of activated Val-AMP. The other activity is designated 'posttransfer' editing and involves deacylation of mischarged Val-tRNA(Ile). This is Isoleucine--tRNA ligase from Staphylococcus saprophyticus subsp. saprophyticus (strain ATCC 15305 / DSM 20229 / NCIMB 8711 / NCTC 7292 / S-41).